Here is a 403-residue protein sequence, read N- to C-terminus: S-adenosylmethionine synthase (403 aa).

Position 17 (H17) interacts with ATP. Residue D19 coordinates Mg(2+). K(+) is bound at residue E45. L-methionine-binding residues include E58 and Q101. The interval 101–111 is flexible loop; it reads QSPDIAMGVDR. ATP is bound by residues 177 to 179, 244 to 245, D253, 259 to 260, A276, and K280; these read DGK, RF, and RK. D253 contributes to the L-methionine binding site. An L-methionine-binding site is contributed by K284.

It belongs to the AdoMet synthase family. In terms of assembly, homotetramer; dimer of dimers. It depends on Mg(2+) as a cofactor. K(+) is required as a cofactor.

The protein localises to the cytoplasm. The catalysed reaction is L-methionine + ATP + H2O = S-adenosyl-L-methionine + phosphate + diphosphate. It participates in amino-acid biosynthesis; S-adenosyl-L-methionine biosynthesis; S-adenosyl-L-methionine from L-methionine: step 1/1. Functionally, catalyzes the formation of S-adenosylmethionine (AdoMet) from methionine and ATP. The overall synthetic reaction is composed of two sequential steps, AdoMet formation and the subsequent tripolyphosphate hydrolysis which occurs prior to release of AdoMet from the enzyme. In Geobacillus kaustophilus (strain HTA426), this protein is S-adenosylmethionine synthase.